A 164-amino-acid polypeptide reads, in one-letter code: Arginine repressor (164 aa).

The protein belongs to the ArgR family.

It localises to the cytoplasm. The protein operates within amino-acid biosynthesis; L-arginine biosynthesis [regulation]. In terms of biological role, regulates arginine biosynthesis genes. In Mycobacterium avium (strain 104), this protein is Arginine repressor.